The sequence spans 217 residues: Killer cell lectin-like receptor subfamily B member 1F (217 aa).

Topologically, residues 1 to 45 (MDTSKVHGNVKPFRCPGYKQASSPSFSPDACRCPHWHHLALKSGC) are cytoplasmic. Positions 31-34 (CRCP) match the LCK-binding motif motif. The chain crosses the membrane as a helical; Signal-anchor for type II membrane protein span at residues 46-66 (AGLILLLLSLIGLSVLVRFLV). Topologically, residues 67-217 (QKPPIEKCSV…WICQKTLIHV (151 aa)) are extracellular. N-linked (GlcNAc...) asparagine glycosylation is present at N81. A C-type lectin domain is found at 101-211 (HWNKCLFVSQ…CSSDNHWICQ (111 aa)). 2 disulfides stabilise this stretch: C122-C210 and C189-C202.

As to expression, highly expressed in dendritic cells. Detectable in natural killer cells.

It is found in the membrane. Its function is as follows. Binds CLEC2I/Clr-g leading to activation of natural killer cells or costimulation of IL-2 production and proliferation of T-cells in response to antigen stimulation. May contribute to the formation of the immunological synapse between T-cells and antigen-presenting dendritic cells. This chain is Killer cell lectin-like receptor subfamily B member 1F (Klrb1f), found in Mus musculus (Mouse).